We begin with the raw amino-acid sequence, 670 residues long: MTPTPDAPAAADAATGAGWLARRRGALARVALAPVAQAIGRVERVADGIAFVSGLEDTMLNEVLRFEGGVTGFAHTLDEDLISVVLLDPDAGVRAQTAVARTGAVLEVPAGPQLLGRVVDPLGRPLDGGAPLDAAHTLPIERAAPAIIERDLVSEPLDTGVLIVDALFTIGRGQRELIIGDRATGKTSLAIDAIVNQRHSDVICVYVAIGQRASAVRRVIDAVRRYGAPERCVFVVAPAACAPGLQWIAPFAGFSIAEYFRDRGQHALVVVDDLTKHAATHRELALLTREPPGREAYPGDIFYVHARLLERAAKLSAALGGGSLSALPIAETDAGNLAAYIPTNLISITDGQIVLDSALFAANQRPAVDVGLSVSRVGGKAQHPALRAASGRLRLDYAQFLELEAFTRFGGLTDARLRAQITRGERIRALITQPRFRALRTLDEVVLLKALAAGALDAMSPDLVAPLRERLPAWLDARIAALTPALAPPRDWLADDAALDALAESVGELIERIAADAAHRATAGMPAEDAAGDIGGAFGGEQARGDADRDADHGANREVSREVSPEASREVSREVSREVSHEADRDAAADAARVAGRAPGRAEPDRAAPRAMPDGPPRAQADGDRASASRPRPDARGDAARTAPSPQGGAEVNVNAAANVDAEAEARHKR.

G180–T187 is a binding site for ATP. The tract at residues A527–R670 is disordered. The span at A543 to A588 shows a compositional bias: basic and acidic residues. Over residues A589–P599 the composition is skewed to low complexity. A compositionally biased stretch (basic and acidic residues) spans A621–A639. Low complexity predominate over residues A640–D661.

This sequence belongs to the ATPase alpha/beta chains family. In terms of assembly, F-type ATPases have 2 components, CF(1) - the catalytic core - and CF(0) - the membrane proton channel. CF(1) has five subunits: alpha(3), beta(3), gamma(1), delta(1), epsilon(1). CF(0) has three main subunits: a(1), b(2) and c(9-12). The alpha and beta chains form an alternating ring which encloses part of the gamma chain. CF(1) is attached to CF(0) by a central stalk formed by the gamma and epsilon chains, while a peripheral stalk is formed by the delta and b chains.

The protein resides in the cell inner membrane. The enzyme catalyses ATP + H2O + 4 H(+)(in) = ADP + phosphate + 5 H(+)(out). Functionally, produces ATP from ADP in the presence of a proton gradient across the membrane. The alpha chain is a regulatory subunit. This Burkholderia pseudomallei (strain 668) protein is ATP synthase subunit alpha 2.